A 387-amino-acid polypeptide reads, in one-letter code: MALVFKSIGAHKTPPCTLNLASPALYHTRVTMASTITHPPPLKDRKISSTRRVRTYPLAPEKAEIFNSMHGWVEDTILPFLKPVEESWQPTDFLPDSTSDGFHEQVEELRKRTADLPDDYLVALVGAMVTEEALPTYQTMLNTTDVIYDESGASPVPWAVWTRAWTAEENRHGDIVNKYLYLSGRVDMKQIEKTIQYLIGSGMDPGADNNPYLAYIYTSYQERATAISHGSLGRLARQKGEMKLAQICGTISADEKRHEAAYSKIVEKLFELDPEGTMLALAYMMKMKIVMPARLMHDGKDPDMFQHFSAVSQRLGIYTAKEYTDILEHMIARWGVDKLTGLSGEGRRAQDYVCGLPMRFRKVEERAQAWAENISHVPFSWIFGRRV.

The N-terminal 29 residues, 1–29, are a transit peptide targeting the chloroplast; it reads MALVFKSIGAHKTPPCTLNLASPALYHTR. Fe cation-binding residues include Glu-131, Glu-169, His-172, Glu-222, Glu-255, and His-258.

It belongs to the fatty acid desaturase type 2 family. Requires Fe(2+) as cofactor.

It is found in the plastid. The protein resides in the chloroplast. The enzyme catalyses hexadecanoyl-[ACP] + 2 reduced [2Fe-2S]-[ferredoxin] + O2 + 2 H(+) = (6Z)-hexadecenoyl-[ACP] + 2 oxidized [2Fe-2S]-[ferredoxin] + 2 H2O. The protein operates within lipid metabolism; fatty acid metabolism. Inhibited by KCN or H(2)O(2). In terms of biological role, delta(6) fatty acid desaturase introducing a cis double bond at carbon 6 of palmitoyl-[acyl-carrier protein](16:0-ACP), producing 16:1(6Z)-ACP. No activity with the coenzyme A ester of the fatty acid. The position of the double bond is determined by its distance from the carboxyl end of the fatty acid. Low activity with several saturated acyl-[acyl-carrier protein]s, including 14:0-ACP and 18:0-ACP. Requires reduced ferredoxin for detectable in vitro activity. This is Acyl-[acyl-carrier-protein] 6-desaturase from Thunbergia alata (Black-eyed Susan vine).